The sequence spans 449 residues: Probable phosphoglucosamine mutase (449 aa).

The active-site Phosphoserine intermediate is the serine 96. Serine 96, aspartate 233, aspartate 235, and aspartate 237 together coordinate Mg(2+). Serine 96 is subject to Phosphoserine.

Belongs to the phosphohexose mutase family. Mg(2+) serves as cofactor. Activated by phosphorylation.

It carries out the reaction alpha-D-glucosamine 1-phosphate = D-glucosamine 6-phosphate. Functionally, catalyzes the conversion of glucosamine-6-phosphate to glucosamine-1-phosphate. The polypeptide is Probable phosphoglucosamine mutase (Thermococcus gammatolerans (strain DSM 15229 / JCM 11827 / EJ3)).